A 316-amino-acid polypeptide reads, in one-letter code: Lipoyl synthase (316 aa).

Residues Cys60, Cys65, Cys71, Cys86, Cys90, Cys93, and Ser297 each contribute to the [4Fe-4S] cluster site. In terms of domain architecture, Radical SAM core spans Trp72 to Thr286.

The protein belongs to the radical SAM superfamily. Lipoyl synthase family. [4Fe-4S] cluster is required as a cofactor.

It is found in the cytoplasm. The enzyme catalyses [[Fe-S] cluster scaffold protein carrying a second [4Fe-4S](2+) cluster] + N(6)-octanoyl-L-lysyl-[protein] + 2 oxidized [2Fe-2S]-[ferredoxin] + 2 S-adenosyl-L-methionine + 4 H(+) = [[Fe-S] cluster scaffold protein] + N(6)-[(R)-dihydrolipoyl]-L-lysyl-[protein] + 4 Fe(3+) + 2 hydrogen sulfide + 2 5'-deoxyadenosine + 2 L-methionine + 2 reduced [2Fe-2S]-[ferredoxin]. It functions in the pathway protein modification; protein lipoylation via endogenous pathway; protein N(6)-(lipoyl)lysine from octanoyl-[acyl-carrier-protein]: step 2/2. Functionally, catalyzes the radical-mediated insertion of two sulfur atoms into the C-6 and C-8 positions of the octanoyl moiety bound to the lipoyl domains of lipoate-dependent enzymes, thereby converting the octanoylated domains into lipoylated derivatives. This Nocardioides sp. (strain ATCC BAA-499 / JS614) protein is Lipoyl synthase.